The following is a 212-amino-acid chain: Orotate phosphoribosyltransferase (212 aa).

5-phospho-alpha-D-ribose 1-diphosphate contacts are provided by residues Arg97, Lys101, His103, and 123–131; that span reads EDLISTGGS. Ser127 is a binding site for orotate.

This sequence belongs to the purine/pyrimidine phosphoribosyltransferase family. PyrE subfamily. As to quaternary structure, homodimer. Requires Mg(2+) as cofactor.

It carries out the reaction orotidine 5'-phosphate + diphosphate = orotate + 5-phospho-alpha-D-ribose 1-diphosphate. It functions in the pathway pyrimidine metabolism; UMP biosynthesis via de novo pathway; UMP from orotate: step 1/2. Its function is as follows. Catalyzes the transfer of a ribosyl phosphate group from 5-phosphoribose 1-diphosphate to orotate, leading to the formation of orotidine monophosphate (OMP). This Bacteroides fragilis (strain ATCC 25285 / DSM 2151 / CCUG 4856 / JCM 11019 / LMG 10263 / NCTC 9343 / Onslow / VPI 2553 / EN-2) protein is Orotate phosphoribosyltransferase.